The following is a 213-amino-acid chain: Kynurenine formamidase (213 aa).

Trp-18 contributes to the substrate binding site. Zn(2+)-binding residues include His-48, His-52, and Asp-54. His-58 (proton donor/acceptor) is an active-site residue. His-160 and Glu-172 together coordinate Zn(2+).

This sequence belongs to the Cyclase 1 superfamily. KynB family. As to quaternary structure, homodimer. Zn(2+) serves as cofactor.

It carries out the reaction N-formyl-L-kynurenine + H2O = L-kynurenine + formate + H(+). The protein operates within amino-acid degradation; L-tryptophan degradation via kynurenine pathway; L-kynurenine from L-tryptophan: step 2/2. Catalyzes the hydrolysis of N-formyl-L-kynurenine to L-kynurenine, the second step in the kynurenine pathway of tryptophan degradation. This is Kynurenine formamidase from Burkholderia thailandensis (strain ATCC 700388 / DSM 13276 / CCUG 48851 / CIP 106301 / E264).